The sequence spans 151 residues: Large-conductance mechanosensitive channel (151 aa).

2 helical membrane passes run 19–39 (VGII…GDVL) and 85–105 (GLFI…FFLV).

Belongs to the MscL family. As to quaternary structure, homopentamer.

It localises to the cell inner membrane. Functionally, channel that opens in response to stretch forces in the membrane lipid bilayer. May participate in the regulation of osmotic pressure changes within the cell. This chain is Large-conductance mechanosensitive channel, found in Chlorobaculum parvum (strain DSM 263 / NCIMB 8327) (Chlorobium vibrioforme subsp. thiosulfatophilum).